The chain runs to 104 residues: L-rhamnose mutarotase (104 aa).

Tyr18 is a binding site for substrate. The Proton donor role is filled by His22. Substrate contacts are provided by residues Tyr41 and 76-77 (WW).

Belongs to the rhamnose mutarotase family. Homodimer.

It is found in the cytoplasm. It catalyses the reaction alpha-L-rhamnose = beta-L-rhamnose. It participates in carbohydrate metabolism; L-rhamnose metabolism. Involved in the anomeric conversion of L-rhamnose. The polypeptide is L-rhamnose mutarotase (Lactiplantibacillus plantarum (strain ATCC BAA-793 / NCIMB 8826 / WCFS1) (Lactobacillus plantarum)).